The following is a 1031-amino-acid chain: Exportin-T (1031 aa).

Belongs to the exportin family.

It is found in the nucleus. The protein resides in the cytoplasm. TRNA nucleus export receptor which facilitates tRNA translocation across the nuclear pore complex. Involved in pre-tRNA splicing, probably by affecting the interaction of pre-tRNA with splicing endonuclease. The chain is Exportin-T (los1) from Emericella nidulans (strain FGSC A4 / ATCC 38163 / CBS 112.46 / NRRL 194 / M139) (Aspergillus nidulans).